The chain runs to 175 residues: NADH-quinone oxidoreductase subunit I (175 aa).

4Fe-4S ferredoxin-type domains follow at residues 69-98 (KRDEQGRERCTSCFCCMWICPADAIYIEAG) and 115-144 (KKFEIDLLRCIFCGMCEEACPKGAIYLDGP). [4Fe-4S] cluster contacts are provided by Cys-78, Cys-81, Cys-84, Cys-88, Cys-124, Cys-127, Cys-130, and Cys-134.

It belongs to the complex I 23 kDa subunit family. NDH-1 is composed of 14 different subunits. Subunits NuoA, H, J, K, L, M, N constitute the membrane sector of the complex. Requires [4Fe-4S] cluster as cofactor.

The protein localises to the cell inner membrane. It carries out the reaction a quinone + NADH + 5 H(+)(in) = a quinol + NAD(+) + 4 H(+)(out). Functionally, NDH-1 shuttles electrons from NADH, via FMN and iron-sulfur (Fe-S) centers, to quinones in the respiratory chain. The immediate electron acceptor for the enzyme in this species is believed to be ubiquinone. Couples the redox reaction to proton translocation (for every two electrons transferred, four hydrogen ions are translocated across the cytoplasmic membrane), and thus conserves the redox energy in a proton gradient. This chain is NADH-quinone oxidoreductase subunit I, found in Leptospira borgpetersenii serovar Hardjo-bovis (strain JB197).